A 244-amino-acid polypeptide reads, in one-letter code: MNLEGKIALVTGASRGIGRAIAELLVERGATVIGTATSEGGAAAISEYLGENGKGLALNVTDVESIEATLKTINDECGAIDILVNNAGITRDNLLMRMKDDEWNDIINTNLTPIYRMSKAVLRGMMKKRAGRIINVGSVVGTMGNAGQTNYAAAKAGVIGFTKSMAREVASRGVTVNTVAPGFIETDMTKALNDDQRAATLSNVPAGRLGDPREIASAVVFLASPEAAYITGETLHVNGGMYMV.

Residues 12 to 15 (GASR), threonine 37, 59 to 60 (NV), and asparagine 86 contribute to the NADP(+) site. A substrate-binding site is contributed by serine 138. Catalysis depends on tyrosine 151, which acts as the Proton acceptor. NADP(+) contacts are provided by residues 151–155 (YAAAK) and isoleucine 184.

It belongs to the short-chain dehydrogenases/reductases (SDR) family. In terms of assembly, homotetramer.

It catalyses the reaction a (3R)-hydroxyacyl-[ACP] + NADP(+) = a 3-oxoacyl-[ACP] + NADPH + H(+). Its pathway is lipid metabolism; fatty acid biosynthesis. Its function is as follows. Catalyzes the NADPH-dependent reduction of beta-ketoacyl-ACP substrates to beta-hydroxyacyl-ACP products, the first reductive step in the elongation cycle of fatty acid biosynthesis. This chain is 3-oxoacyl-[acyl-carrier-protein] reductase FabG (fabG), found in Vibrio harveyi (Beneckea harveyi).